The following is a 291-amino-acid chain: Acetylglutamate kinase (291 aa).

Substrate-binding positions include 64-65 (GG), R86, and N190.

This sequence belongs to the acetylglutamate kinase family. ArgB subfamily.

It is found in the cytoplasm. The enzyme catalyses N-acetyl-L-glutamate + ATP = N-acetyl-L-glutamyl 5-phosphate + ADP. The protein operates within amino-acid biosynthesis; L-arginine biosynthesis; N(2)-acetyl-L-ornithine from L-glutamate: step 2/4. Catalyzes the ATP-dependent phosphorylation of N-acetyl-L-glutamate. The protein is Acetylglutamate kinase of Leptospira borgpetersenii serovar Hardjo-bovis (strain L550).